The primary structure comprises 262 residues: Dehydrin COR410 (262 aa).

Disordered regions lie at residues 1–153 (MEDE…HDTD) and 187–262 (LPGG…KPSA). Basic and acidic residues-rich tracts occupy residues 34–45 (KKAEEDKEKEEE) and 53–74 (VSVEEPEVKKEEHEDGEKKETL). The span at 89–101 (SDEEEEEVIDDNG) shows a compositional bias: acidic residues. A run of 2 repeats spans residues 106–126 (RKKKKGLKEKLQGKLPGHKDT) and 173–193 (EEEKKGFLEKIKEKLPGGHKK). A 3 X 21 AA repeats, Lys-rich region spans residues 106-245 (RKKKKGLKEK…MDKLPGYHKT (140 aa)). Basic and acidic residues-rich tracts occupy residues 113–130 (KEKLQGKLPGHKDTEGEH) and 187–196 (LPGGHKKPED). Positions 197-209 (AAAVPVTHAAPAP) are enriched in low complexity. Repeat unit 3 spans residues 225–245 (AKEKKGLLGKIMDKLPGYHKT). Residues 244 to 262 (KTGEEDKAAAATGEHKPSA) show a composition bias toward basic and acidic residues.

As to expression, expressed in roots, crown and leaves during cold acclimation.

This is Dehydrin COR410 (COR410) from Triticum aestivum (Wheat).